The sequence spans 78 residues: Translation initiation factor IF-1, chloroplastic (78 aa).

One can recognise an S1-like domain in the interval 1–73 (MASNRELIEM…TKGRIIYRLR (73 aa)).

This sequence belongs to the IF-1 family. Component of the 30S ribosomal translation pre-initiation complex which assembles on the 30S ribosome in the order IF-2 and IF-3, IF-1 and N-formylmethionyl-tRNA(fMet); mRNA recruitment can occur at any time during PIC assembly.

The protein resides in the plastid. It localises to the chloroplast. Functionally, one of the essential components for the initiation of protein synthesis. Stabilizes the binding of IF-2 and IF-3 on the 30S subunit to which N-formylmethionyl-tRNA(fMet) subsequently binds. Helps modulate mRNA selection, yielding the 30S pre-initiation complex (PIC). Upon addition of the 50S ribosomal subunit IF-1, IF-2 and IF-3 are released leaving the mature 70S translation initiation complex. The sequence is that of Translation initiation factor IF-1, chloroplastic from Ostreococcus tauri.